Here is a 135-residue protein sequence, read N- to C-terminus: Succinate dehydrogenase assembly factor 2, mitochondrial (135 aa).

The protein belongs to the SDHAF2 family. Interacts with the flavoprotein subunit within the SDH catalytic dimer.

The protein resides in the mitochondrion matrix. In terms of biological role, plays an essential role in the assembly of succinate dehydrogenase (SDH), an enzyme complex (also referred to as respiratory complex II) that is a component of both the tricarboxylic acid (TCA) cycle and the mitochondrial electron transport chain, and which couples the oxidation of succinate to fumarate with the reduction of ubiquinone (coenzyme Q) to ubiquinol. Required for flavinylation (covalent attachment of FAD) of the flavoprotein subunit of the SDH catalytic dimer. The sequence is that of Succinate dehydrogenase assembly factor 2, mitochondrial from Meyerozyma guilliermondii (strain ATCC 6260 / CBS 566 / DSM 6381 / JCM 1539 / NBRC 10279 / NRRL Y-324) (Yeast).